The sequence spans 498 residues: Argininosuccinate lyase 1 (498 aa).

The protein belongs to the lyase 1 family. Argininosuccinate lyase subfamily.

Its subcellular location is the cytoplasm. It catalyses the reaction 2-(N(omega)-L-arginino)succinate = fumarate + L-arginine. Its pathway is amino-acid biosynthesis; L-arginine biosynthesis; L-arginine from L-ornithine and carbamoyl phosphate: step 3/3. The protein is Argininosuccinate lyase 1 of Shouchella clausii (strain KSM-K16) (Alkalihalobacillus clausii).